Here is a 307-residue protein sequence, read N- to C-terminus: Malate dehydrogenase (307 aa).

NAD(+) is bound by residues 8-13 and Asp32; that span reads GAGNVG. Substrate contacts are provided by Arg81 and Arg87. NAD(+)-binding positions include Asn94 and 117 to 119; that span reads VSN. Substrate contacts are provided by Asn119 and Arg150. His174 functions as the Proton acceptor in the catalytic mechanism.

It belongs to the LDH/MDH superfamily. MDH type 3 family.

It carries out the reaction (S)-malate + NAD(+) = oxaloacetate + NADH + H(+). In terms of biological role, catalyzes the reversible oxidation of malate to oxaloacetate. The chain is Malate dehydrogenase from Dehalococcoides mccartyi (strain ATCC BAA-2100 / JCM 16839 / KCTC 5957 / BAV1).